A 118-amino-acid polypeptide reads, in one-letter code: Ribonuclease P protein component (118 aa).

This sequence belongs to the RnpA family. As to quaternary structure, consists of a catalytic RNA component (M1 or rnpB) and a protein subunit.

It catalyses the reaction Endonucleolytic cleavage of RNA, removing 5'-extranucleotides from tRNA precursor.. In terms of biological role, RNaseP catalyzes the removal of the 5'-leader sequence from pre-tRNA to produce the mature 5'-terminus. It can also cleave other RNA substrates such as 4.5S RNA. The protein component plays an auxiliary but essential role in vivo by binding to the 5'-leader sequence and broadening the substrate specificity of the ribozyme. This Rickettsia conorii (strain ATCC VR-613 / Malish 7) protein is Ribonuclease P protein component.